Reading from the N-terminus, the 330-residue chain is MTHTLRVIFAGTPEFAAAALAAIHKAGFPVPLVLTQPDRPAGRGMKLQASAVKRYAVEHGMAVAQPPSLRRAGKYPAEAADAIELLRTTPHDVMVVAAYGLLLPQEVLDIPRAGCINIHASLLPRWRGAAPIHRAIEAGDAETGVTLMQMDVGLDTGAMIEEARIAIAPDDTTATLHDRLAADGARLIVDALVRLERDGTLPATPQPADGVTYAEKIGKHEAALDWRKPADVLARQVRAFDPFPGGVATLDGAAIKLWAAEPVATDGTIASAAPGTIVEAAPEGVVVACGSGALRVTQLQKPGGKRLPAREFLAGSPLAAGQRFALPDVD.

121–124 provides a ligand contact to (6S)-5,6,7,8-tetrahydrofolate; that stretch reads SLLP.

It belongs to the Fmt family.

The catalysed reaction is L-methionyl-tRNA(fMet) + (6R)-10-formyltetrahydrofolate = N-formyl-L-methionyl-tRNA(fMet) + (6S)-5,6,7,8-tetrahydrofolate + H(+). Attaches a formyl group to the free amino group of methionyl-tRNA(fMet). The formyl group appears to play a dual role in the initiator identity of N-formylmethionyl-tRNA by promoting its recognition by IF2 and preventing the misappropriation of this tRNA by the elongation apparatus. The sequence is that of Methionyl-tRNA formyltransferase from Burkholderia cenocepacia (strain HI2424).